Consider the following 575-residue polypeptide: FAD-dependent monooxygenase rstn6 (575 aa).

The signal sequence occupies residues 1–17; it reads MYDVIVIGAGWCGLVAA. Isoleucine 106 contacts FAD. N-linked (GlcNAc...) asparagine glycans are attached at residues asparagine 239 and asparagine 295.

Belongs to the FAD-binding monooxygenase family. FAD is required as a cofactor.

Its pathway is antifungal biosynthesis. In terms of biological role, FAD-dependent monooxygenase; part of the gene cluster that mediates the biosynthesis of the tetrahydropyranyl antifungal agent restricticin that acts as an inhibitor of CYP51 and blocks the ergosterol biosynthesis. The highly reducing polyketide synthase rstn3, the short chain dehydrogenase rstn4, the cyclase rstn5, the FAD-dependent monooxygenase rstn6 and the enoylreductase rstn7 are required to generate the first stable intermediate desmethylrestrictinol. Rstn3 with rstn7 biosynthesize the first polyketide chain intermediate that is reduced by rstn4, followed by epoxidation by rstn6 before 6-endo cyclization via epoxide opening by rstn5 leads to desmethylrestrictinol. The methyltransferase rstn1 then catalyzes the C4 O-methylation of desmethylrestrictinol to produce restrictinol, and the nonribosomal peptide synthetase rstn8 catalyzes the C3 esterification of restrictinol with glycine that leads to restricticin. This chain is FAD-dependent monooxygenase rstn6, found in Aspergillus nomiae NRRL (strain ATCC 15546 / NRRL 13137 / CBS 260.88 / M93).